We begin with the raw amino-acid sequence, 321 residues long: Thioredoxin reductase tcpT (321 aa).

FAD-binding positions include 14 to 17 (GGPA), 36 to 41 (DSGRYR), His-49, and Ala-114. Cys-138 and Cys-141 form a disulfide bridge. FAD-binding positions include Asp-282 and 289–290 (NV).

Belongs to the class-II pyridine nucleotide-disulfide oxidoreductase family. In terms of assembly, homodimer. It depends on FAD as a cofactor.

The protein operates within secondary metabolite biosynthesis. Its function is as follows. Thioredoxin reductase; part of the gene cluster that mediates the biosynthesis of an unusual class of epipolythiodioxopiperazines (ETPs) lacking the reactive thiol group important for toxicity. Firstly, L-tyrosine is prenylated by tcpD, before undergoing condensation with L-glycine in a reaction catalyzed by the NRPS tcpP leading to the diketopiperazine (DKP) backbone. Afterwards the alpha-carbon of tyrosine is oxidized by the cytochrome P450 tcpC to form a hydroxyl group. However, in contrast other ETP biosynthesis pathways studied so far, tcpC is not able to bishydroxylate the DKP at both alpha-carbon positions, but hydroxylates the alpha-carbon of the tyrosine part and the nitrogen of the glycine part. The next steps involve an alpha,beta-elimination reaction catalyzed by tcpI, a methylation by the methyltransferase tcpN the action of the four enzyme cascade tcpG/K/J/I. Due to a dysfunctional cytochrome P450 monooxygenase tcpC, the pathway leads to the biosynthesis of probable non-toxic metabolites lacking the reactive thiol group. In Claviceps purpurea (strain 20.1) (Ergot fungus), this protein is Thioredoxin reductase tcpT.